A 130-amino-acid polypeptide reads, in one-letter code: MVLLDPLADALSIIKNAEAVGKDSCTIRPASKLIGNVLKVMNDRGYIGDFEFVEDGKAGVYTVELIGRINKCGAIKPRYSVGVTEFERWEKQFLPAKNFGVLILTTPKGVISQYEARENNVGGQLLSFVY.

Belongs to the universal ribosomal protein uS8 family. Part of the 30S ribosomal subunit.

In terms of biological role, one of the primary rRNA binding proteins, it binds directly to 16S rRNA central domain where it helps coordinate assembly of the platform of the 30S subunit. The polypeptide is Small ribosomal subunit protein uS8 (Methanococcoides burtonii (strain DSM 6242 / NBRC 107633 / OCM 468 / ACE-M)).